The following is a 347-amino-acid chain: Heat-inducible transcription repressor HrcA (347 aa).

Belongs to the HrcA family.

Functionally, negative regulator of class I heat shock genes (grpE-dnaK-dnaJ and groELS operons). Prevents heat-shock induction of these operons. This is Heat-inducible transcription repressor HrcA from Lactococcus lactis subsp. cremoris (strain SK11).